An 872-amino-acid chain; its full sequence is Alanine--tRNA ligase (872 aa).

Zn(2+) contacts are provided by His567, His571, Cys669, and His673.

The protein belongs to the class-II aminoacyl-tRNA synthetase family. Zn(2+) is required as a cofactor.

The protein localises to the cytoplasm. The catalysed reaction is tRNA(Ala) + L-alanine + ATP = L-alanyl-tRNA(Ala) + AMP + diphosphate. Its function is as follows. Catalyzes the attachment of alanine to tRNA(Ala) in a two-step reaction: alanine is first activated by ATP to form Ala-AMP and then transferred to the acceptor end of tRNA(Ala). Also edits incorrectly charged Ser-tRNA(Ala) and Gly-tRNA(Ala) via its editing domain. In Streptococcus sanguinis (strain SK36), this protein is Alanine--tRNA ligase.